Here is a 345-residue protein sequence, read N- to C-terminus: Flap endonuclease 1 (345 aa).

The interval 1–103 is N-domain; sequence MGIKQLSKLL…KELEKRKERR (103 aa). Residue Asp34 participates in Mg(2+) binding. Residues Arg47 and Arg69 each contribute to the DNA site. Mg(2+)-binding residues include Asp85, Glu157, Glu159, Asp178, and Asp180. The segment at 121-252 is I-domain; the sequence is LMEMYDKRKT…KKALGLIKKH (132 aa). Glu157 contacts DNA. Gly230 and Asp232 together coordinate DNA. Asp232 is a Mg(2+) binding site. The segment at 333–341 is interaction with PCNA; that stretch reads TQGRLDCFI.

The protein belongs to the XPG/RAD2 endonuclease family. FEN1 subfamily. In terms of assembly, interacts with PCNA. Three molecules of FEN1 bind to one PCNA trimer with each molecule binding to one PCNA monomer. PCNA stimulates the nuclease activity without altering cleavage specificity. Mg(2+) serves as cofactor. In terms of processing, phosphorylated. Phosphorylation upon DNA damage induces relocalization to the nuclear plasma.

The protein localises to the nucleus. Its subcellular location is the nucleolus. It is found in the nucleoplasm. The protein resides in the mitochondrion. Functionally, structure-specific nuclease with 5'-flap endonuclease and 5'-3' exonuclease activities involved in DNA replication and repair. During DNA replication, cleaves the 5'-overhanging flap structure that is generated by displacement synthesis when DNA polymerase encounters the 5'-end of a downstream Okazaki fragment. It enters the flap from the 5'-end and then tracks to cleave the flap base, leaving a nick for ligation. Also involved in the long patch base excision repair (LP-BER) pathway, by cleaving within the apurinic/apyrimidinic (AP) site-terminated flap. Acts as a genome stabilization factor that prevents flaps from equilibrating into structures that lead to duplications and deletions. Also possesses 5'-3' exonuclease activity on nicked or gapped double-stranded DNA, and exhibits RNase H activity. Also involved in replication and repair of rDNA and in repairing mitochondrial DNA. This is Flap endonuclease 1 from Encephalitozoon cuniculi (strain GB-M1) (Microsporidian parasite).